The sequence spans 776 residues: Serine/threonine-protein kinase-like protein CCR2 (776 aa).

The signal sequence occupies residues M1–A22. Over Y23 to L432 the chain is Extracellular. Residues N59, N92, N154, N162, N205, N278, N287, and N350 are each glycosylated (N-linked (GlcNAc...) asparagine). The stretch at N341–C396 is one TNFR-Cys repeat. Intrachain disulfides connect C342-C371, C374-C388, and C378-C396. Residue N404 is glycosylated (N-linked (GlcNAc...) asparagine). Residues V433–I453 traverse the membrane as a helical segment. Topologically, residues P454–F776 are cytoplasmic. Positions F519–F776 constitute a Protein kinase domain. Residues L525–V533 and K547 contribute to the ATP site. Catalysis depends on D644, which acts as the Proton acceptor.

It belongs to the protein kinase superfamily. Ser/Thr protein kinase family. Homodimer. Expressed in roots, leaves, shoot apical meristems (SAM), and floral buds.

It localises to the membrane. It carries out the reaction L-seryl-[protein] + ATP = O-phospho-L-seryl-[protein] + ADP + H(+). The catalysed reaction is L-threonyl-[protein] + ATP = O-phospho-L-threonyl-[protein] + ADP + H(+). Serine/threonine-protein kinase with low activity. This Arabidopsis thaliana (Mouse-ear cress) protein is Serine/threonine-protein kinase-like protein CCR2 (CCR2).